The chain runs to 225 residues: UPF0758 protein BCE_4545 (225 aa).

Positions 103-225 constitute an MPN domain; sequence SIRSPEDCAT…FVSLKEKGHI (123 aa). Zn(2+) is bound by residues histidine 174, histidine 176, and aspartate 187. The short motif at 174 to 187 is the JAMM motif element; that stretch reads HNHPSGDPAPSRED.

This sequence belongs to the UPF0758 family.

In Bacillus cereus (strain ATCC 10987 / NRS 248), this protein is UPF0758 protein BCE_4545.